Consider the following 1448-residue polypeptide: ABC transporter G family member 9 (1448 aa).

The span at 16 to 28 (EGGSNLNINTPSG) shows a compositional bias: polar residues. The tract at residues 16 to 41 (EGGSNLNINTPSGMSDGDFNSGANSP) is disordered. In terms of domain architecture, ABC transporter 1 spans 136–385 (LFKPSTWKIE…FLDLGFDCEP (250 aa)). The ABC transmembrane type-2 1 domain maps to 490 to 717 (WGDKFSLVSR…APYDNSVRVC (228 aa)). Helical transmembrane passes span 494 to 514 (FSLVSRYLSVIIQSFVYGSVF), 530 to 550 (AIFAAILFNAFLSEGELFATF), 579 to 599 (IPLTTVQVFLFSIVVYFMFGL), 604 to 624 (GKFFIFCFTLIGATLATTNMF), 634 to 654 (LYVSQNVMTGILIFMISYCGY), 663 to 683 (PWFGWFFWANPFTYAFKALMA), and 748 to 768 (LNIFITYLWWVLFIIINMVAV). Positions 822–1066 (FTWENIKYTV…LTSYFERQGV (245 aa)) constitute an ABC transporter 2 domain. Position 858–865 (858–865 (GSSGAGKT)) interacts with ATP. A run of 6 helical transmembrane segments spans residues 1157-1177 (FYAYGSILQAVMTGIIVGFTF), 1191-1211 (IFFIFQALLLGILLIFVVMVQ), 1233-1253 (FAISIVLVEIPYTIVCGSVFF), 1272-1292 (FYFWIIFIIYLFFCVSFGGAI), 1299-1319 (MFLAMTLVPLLIVFLFLFCGV), and 1422-1442 (IAILIAFWMFNIFLVVSFVYL). The ABC transmembrane type-2 2 domain occupies 1157 to 1389 (FYAYGSILQA…VPATGYVTNT (233 aa)).

It belongs to the ABC transporter superfamily. ABCG family. PDR (TC 3.A.1.205) subfamily.

It localises to the membrane. In Dictyostelium discoideum (Social amoeba), this protein is ABC transporter G family member 9 (abcG9).